A 1223-amino-acid polypeptide reads, in one-letter code: DNA-directed RNA polymerase subunit beta'' (1223 aa).

Residues C233, C307, C314, and C317 each coordinate Zn(2+).

It belongs to the RNA polymerase beta' chain family. RpoC2 subfamily. In plastids the minimal PEP RNA polymerase catalytic core is composed of four subunits: alpha, beta, beta', and beta''. When a (nuclear-encoded) sigma factor is associated with the core the holoenzyme is formed, which can initiate transcription. Requires Zn(2+) as cofactor.

Its subcellular location is the plastid. It is found in the chloroplast. It catalyses the reaction RNA(n) + a ribonucleoside 5'-triphosphate = RNA(n+1) + diphosphate. DNA-dependent RNA polymerase catalyzes the transcription of DNA into RNA using the four ribonucleoside triphosphates as substrates. The chain is DNA-directed RNA polymerase subunit beta'' from Mesostigma viride (Green alga).